The primary structure comprises 95 residues: MADVEEWLTHARKVTQEASIGVDVTSIQECISAEPAQRVLVARRDAWRAICCAAFAALVAFAAINRVATIMLEKPAPTWVATPSAASPFGLLIGK.

The Cytoplasmic segment spans residues methionine 1–aspartate 45. The helical transmembrane segment at alanine 46–alanine 68 threads the bilayer. Topologically, residues threonine 69–lysine 95 are periplasmic.

It to A.xylosoxydans NccY.

The protein localises to the cell inner membrane. Functionally, nickel and cobalt resistance proteins CnrA, CnrB, CnrC CnrH and CnrR may be involved in the regulation of CNR. CnrH alone is able to activate cnr expression, and both CnrY and CrnX are needed for nickel induction of CnrH. In the absence of wild-type CnrY (due either to a frameshift, PubMed:10671463 or absence of the transcript, PubMed:10671464), nickel and cobalt resistance is constitutive, indicating that CrnY may act as a repressor or an anti-sigma factor. This is Nickel and cobalt resistance protein CnrY (cnrY) from Cupriavidus metallidurans (strain ATCC 43123 / DSM 2839 / NBRC 102507 / CH34) (Ralstonia metallidurans).